Consider the following 243-residue polypeptide: UPF0173 metal-dependent hydrolase Xaut_3786 (243 aa).

The protein belongs to the UPF0173 family.

The protein is UPF0173 metal-dependent hydrolase Xaut_3786 of Xanthobacter autotrophicus (strain ATCC BAA-1158 / Py2).